The following is a 75-amino-acid chain: U6-lycotoxin-Ls1c (75 aa).

The first 21 residues, 1–21 (MKLLLFTALVLVVISLIEVEA), serve as a signal peptide directing secretion. A propeptide spanning residues 22–25 (ENER) is cleaved from the precursor. 4 disulfide bridges follow: Cys27–Cys42, Cys34–Cys47, Cys41–Cys65, and Cys49–Cys63.

Belongs to the neurotoxin 19 (CSTX) family. 06 (U6-Lctx) subfamily. Expressed by the venom gland.

The protein resides in the secreted. This chain is U6-lycotoxin-Ls1c, found in Lycosa singoriensis (Wolf spider).